We begin with the raw amino-acid sequence, 315 residues long: Putative S-adenosyl-L-methionine-dependent methyltransferase MAV_4557 (315 aa).

S-adenosyl-L-methionine contacts are provided by residues Asp134 and 163–164 (DL).

It belongs to the UPF0677 family.

Its function is as follows. Exhibits S-adenosyl-L-methionine-dependent methyltransferase activity. In Mycobacterium avium (strain 104), this protein is Putative S-adenosyl-L-methionine-dependent methyltransferase MAV_4557.